The primary structure comprises 276 residues: Adenylyl-sulfate kinase 1, chloroplastic (276 aa).

A chloroplast-targeting transit peptide spans 1 to 38 (MIAAGAKSLLGLSMASPKGIFDSNSMSNSRSVVVVRAC). A disordered region spans residues 46–74 (TLSHNKNGSIPEVKSINGHTGQKQGPLST). Positions 62–74 (NGHTGQKQGPLST) are enriched in polar residues. Position 108-116 (108-116 (GLSGSGKST)) interacts with ATP. Substrate contacts are provided by residues aspartate 138, arginine 141, arginine 155, asparagine 158, 181 to 182 (IS), and glycine 231. The active-site Phosphoserine intermediate is the serine 182.

This sequence belongs to the APS kinase family. In terms of assembly, homodimer; disulfide-linked. Interacts with APK2. In terms of tissue distribution, expressed in root vasculature, root tips, leaf epidermal and guard cells, pollen grains and funiculus of developing seeds.

The protein localises to the plastid. It localises to the chloroplast. It carries out the reaction adenosine 5'-phosphosulfate + ATP = 3'-phosphoadenylyl sulfate + ADP + H(+). It functions in the pathway sulfur metabolism; hydrogen sulfide biosynthesis; sulfite from sulfate: step 2/3. In terms of biological role, catalyzes the synthesis of activated sulfate. Essential for plant reproduction and viability. Required for the production of glucosinolates. The chain is Adenylyl-sulfate kinase 1, chloroplastic (APK1) from Arabidopsis thaliana (Mouse-ear cress).